A 189-amino-acid chain; its full sequence is Transcription factor FapR (189 aa).

It belongs to the FapR family.

In terms of biological role, transcriptional factor involved in regulation of membrane lipid biosynthesis by repressing genes involved in fatty acid and phospholipid metabolism. The sequence is that of Transcription factor FapR from Exiguobacterium sp. (strain ATCC BAA-1283 / AT1b).